The following is a 375-amino-acid chain: Coproporphyrin III ferrochelatase (375 aa).

S59 and Y128 together coordinate Fe-coproporphyrin III. 2 residues coordinate Fe(2+): H191 and E286.

Belongs to the ferrochelatase family.

It localises to the cytoplasm. The catalysed reaction is Fe-coproporphyrin III + 2 H(+) = coproporphyrin III + Fe(2+). It participates in porphyrin-containing compound metabolism; protoheme biosynthesis. Its function is as follows. Involved in coproporphyrin-dependent heme b biosynthesis. Catalyzes the insertion of ferrous iron into coproporphyrin III to form Fe-coproporphyrin III. The sequence is that of Coproporphyrin III ferrochelatase from Streptomyces griseus subsp. griseus (strain JCM 4626 / CBS 651.72 / NBRC 13350 / KCC S-0626 / ISP 5235).